The following is a 168-amino-acid chain: Transcription elongation factor GreB (168 aa).

This sequence belongs to the GreA/GreB family. GreB subfamily.

Functionally, necessary for efficient RNA polymerase transcription elongation past template-encoded arresting sites. The arresting sites in DNA have the property of trapping a certain fraction of elongating RNA polymerases that pass through, resulting in locked ternary complexes. Cleavage of the nascent transcript by cleavage factors such as GreA or GreB allows the resumption of elongation from the new 3'terminus. GreB releases sequences of up to 9 nucleotides in length. The protein is Transcription elongation factor GreB of Xanthomonas axonopodis pv. citri (strain 306).